The primary structure comprises 194 residues: dITP/XTP pyrophosphatase (194 aa).

8-13 (TGNPGK) serves as a coordination point for substrate. Mg(2+) contacts are provided by Glu38 and Asp67. Catalysis depends on Asp67, which acts as the Proton acceptor. Residues Ser68, 146 to 149 (FGYD), Lys169, and 174 to 175 (HR) each bind substrate.

It belongs to the HAM1 NTPase family. In terms of assembly, homodimer. Mg(2+) is required as a cofactor.

It carries out the reaction XTP + H2O = XMP + diphosphate + H(+). The enzyme catalyses dITP + H2O = dIMP + diphosphate + H(+). It catalyses the reaction ITP + H2O = IMP + diphosphate + H(+). Functionally, pyrophosphatase that catalyzes the hydrolysis of nucleoside triphosphates to their monophosphate derivatives, with a high preference for the non-canonical purine nucleotides XTP (xanthosine triphosphate), dITP (deoxyinosine triphosphate) and ITP. Seems to function as a house-cleaning enzyme that removes non-canonical purine nucleotides from the nucleotide pool, thus preventing their incorporation into DNA/RNA and avoiding chromosomal lesions. The protein is dITP/XTP pyrophosphatase of Synechocystis sp. (strain ATCC 27184 / PCC 6803 / Kazusa).